The primary structure comprises 389 residues: MPLENLEEEGLPKNPDLRIAQLRFLLSLPEHRGDAAVRDELMAAVRDNNMAPYYEALCKSLDWQIDVDLLNKMKKANEDELKRLDEELEDAEKNLGESEIRDAMMAKAEYLCRIGDKEGALTAFRKTYDKTVALGHRLDIVFYLLRIGLFYMDNDLITRNTEKAKSLIEEGGDWDRRNRLKVYQGLYCVAIRDFKQAAELFLDTVSTFTSYELMDYKTFVTYTVYVSMIALERPDLREKVIKGAEILEVLHSLPAVRQYLFSLYECRYSVFFQSLAVVEQEMKKDWLFAPHYRYYVREMRIHAYSQLLESYRSLTLGYMAEAFGVGVEFIDQELSRFIAAGRLHCKIDKVNEIVETNRPDSKNWQYQETIKKGDLLLNRVQKLSRVINM.

The PCI domain occupies 193 to 361; the sequence is DFKQAAELFL…EIVETNRPDS (169 aa).

Belongs to the proteasome subunit S10 family. In terms of assembly, component of the 19S proteasome regulatory particle complex. The 26S proteasome consists of a 20S core particle (CP) and two 19S regulatory subunits (RP). The regulatory particle is made of a lid composed of 9 subunits including PSMD6, a base containing 6 ATPases and few additional components.

In terms of biological role, component of the 26S proteasome, a multiprotein complex involved in the ATP-dependent degradation of ubiquitinated proteins. This complex plays a key role in the maintenance of protein homeostasis by removing misfolded or damaged proteins, which could impair cellular functions, and by removing proteins whose functions are no longer required. Therefore, the proteasome participates in numerous cellular processes, including cell cycle progression, apoptosis, or DNA damage repair. This chain is 26S proteasome non-ATPase regulatory subunit 6 (PSMD6), found in Homo sapiens (Human).